Reading from the N-terminus, the 689-residue chain is MNFENLLIEVGTEELPPKSLRKLAESFLNNFTDELKKAELTFESAVWHAAPRRLAINVNQLALAQADKVVEKRGPAVAQAFDADGNPTKAAMGWARGNGITVEQADRLKTDKGEWLLHQAKVVGVETKSLIAAMAQRSLDKLPIPKPMRWGSNTTQFIRPVHTVTMLLGSEVVEGELLGIKSDRIIRGHRFMGKPSIELDHADNYLSVLKEQGKVDANYEARKAQIKADAEAAAAKLGGVADLEDDLLEEVTSLVEWPVVLTASFEEKFLDVPAEALVYTMKGDQKYFPVFDDAGQLLPNFIFVTNIESKDPQQIISGNEKVVRPRLADAEFFFETDKKNSLESRLSSLETVVFQKQLGTIKQRVERISAMAAYIATSIGANSEEAARAGLLSKSDLMTNMVMEFTDLQGTMGMHYARLNGETEAVAVALSEQYKPKFSGDTVPTAPVSICVALAEKLDTLVGIFGIGQAPKGAADPFALRRAAIGVLRICLENNLPLDLVDLIAKAQELHGENLTNDKAPEQVLEFFMGRFRAWYQDQGISVDVILAVLARRPTAPADFESRIKAVAHFRTLEQALALAAANKRVSNILAKVEGELPATIDEALLVEAAEKALAAKLAELQPQLAPLFAAANYQEALALLASLRESVDTFFEDVMVMADDEALKNNRLALLSSLRDQFLHAADISLLQ.

The protein belongs to the class-II aminoacyl-tRNA synthetase family. In terms of assembly, tetramer of two alpha and two beta subunits.

The protein localises to the cytoplasm. It carries out the reaction tRNA(Gly) + glycine + ATP = glycyl-tRNA(Gly) + AMP + diphosphate. The chain is Glycine--tRNA ligase beta subunit from Shewanella piezotolerans (strain WP3 / JCM 13877).